A 153-amino-acid polypeptide reads, in one-letter code: Transcriptional repressor NrdR (153 aa).

A zinc finger spans residues cysteine 3–cysteine 34. The ATP-cone domain occupies leucine 49–valine 139.

This sequence belongs to the NrdR family. Requires Zn(2+) as cofactor.

Negatively regulates transcription of bacterial ribonucleotide reductase nrd genes and operons by binding to NrdR-boxes. This Geobacillus sp. (strain WCH70) protein is Transcriptional repressor NrdR.